We begin with the raw amino-acid sequence, 64 residues long: Large ribosomal subunit protein bL28 (64 aa).

Positions 1–21 are disordered; the sequence is MAKKDQLTLRGPLYGNNRSHS.

The protein belongs to the bacterial ribosomal protein bL28 family.

The protein is Large ribosomal subunit protein bL28 of Mycoplasma genitalium (strain ATCC 33530 / DSM 19775 / NCTC 10195 / G37) (Mycoplasmoides genitalium).